The primary structure comprises 255 residues: Phosphate import ATP-binding protein PstB (255 aa).

One can recognise an ABC transporter domain in the interval 9 to 250; sequence MYAQGLQFYY…PRNKQTEDYI (242 aa). 41–48 provides a ligand contact to ATP; the sequence is GPSGCGKS.

It belongs to the ABC transporter superfamily. Phosphate importer (TC 3.A.1.7) family. In terms of assembly, the complex is composed of two ATP-binding proteins (PstB), two transmembrane proteins (PstC and PstA) and a solute-binding protein (PstS).

It is found in the cell inner membrane. It catalyses the reaction phosphate(out) + ATP + H2O = ADP + 2 phosphate(in) + H(+). Functionally, part of the ABC transporter complex PstSACB involved in phosphate import. Responsible for energy coupling to the transport system. The polypeptide is Phosphate import ATP-binding protein PstB (Nitratidesulfovibrio vulgaris (strain ATCC 29579 / DSM 644 / CCUG 34227 / NCIMB 8303 / VKM B-1760 / Hildenborough) (Desulfovibrio vulgaris)).